Reading from the N-terminus, the 269-residue chain is MKSILENRPALAKEVNKVAEVAGYLWQKGWAERNGGNITVNITEFVDDEIRRMEPISEVKSIGVTLPYLKGCYFYCKGTNKRMRDLARWPMENGSVIRILDDCASYVIIADEAVAPTSELPSHLSVHNDLLSKNSPYKASVHTHPIELIAMTHCEKFLQKDVATNLLWSMIPETKAFCPRGLGIIPYKLPSSVELAEATIKELQDYDVVMWEKHGVFAVDCDAMQAFDQIDVLNKSALIYIAAKNMGFEPDGMSQEQMKEMSVAFNLPK.

Residue Glu-119 is part of the active site. Zn(2+) contacts are provided by His-142, His-144, and His-214.

This sequence belongs to the aldolase class II family. RhaD subfamily. It depends on Zn(2+) as a cofactor.

It localises to the cytoplasm. The catalysed reaction is L-rhamnulose 1-phosphate = (S)-lactaldehyde + dihydroxyacetone phosphate. The protein operates within carbohydrate degradation; L-rhamnose degradation; glycerone phosphate from L-rhamnose: step 3/3. Catalyzes the reversible cleavage of L-rhamnulose-1-phosphate to dihydroxyacetone phosphate (DHAP) and L-lactaldehyde. The protein is Rhamnulose-1-phosphate aldolase of Bacteroides thetaiotaomicron (strain ATCC 29148 / DSM 2079 / JCM 5827 / CCUG 10774 / NCTC 10582 / VPI-5482 / E50).